The following is a 570-amino-acid chain: Urease subunit alpha (570 aa).

The Urease domain occupies 131 to 570; the sequence is GGFDSHIHFI…LPLAQRYFMF (440 aa). 3 residues coordinate Ni(2+): His136, His138, and Lys219. An N6-carboxylysine modification is found at Lys219. Substrate is bound at residue His221. 2 residues coordinate Ni(2+): His248 and His274. The active-site Proton donor is the His322. Asp362 is a binding site for Ni(2+).

Belongs to the metallo-dependent hydrolases superfamily. Urease alpha subunit family. Heterotrimer of UreA (gamma), UreB (beta) and UreC (alpha) subunits. Three heterotrimers associate to form the active enzyme. Ni cation is required as a cofactor. Post-translationally, carboxylation allows a single lysine to coordinate two nickel ions.

It localises to the cytoplasm. The catalysed reaction is urea + 2 H2O + H(+) = hydrogencarbonate + 2 NH4(+). It functions in the pathway nitrogen metabolism; urea degradation; CO(2) and NH(3) from urea (urease route): step 1/1. In Rhodopseudomonas palustris (strain TIE-1), this protein is Urease subunit alpha.